A 372-amino-acid polypeptide reads, in one-letter code: Alanine dehydrogenase 1 (372 aa).

Histidine 94 is an active-site residue. An NAD(+)-binding site is contributed by 170-200 (TYVIFGGGVAATNAANVALGLNAKVIIIELN).

The protein belongs to the AlaDH/PNT family.

It catalyses the reaction L-alanine + NAD(+) + H2O = pyruvate + NH4(+) + NADH + H(+). It participates in amino-acid degradation; L-alanine degradation via dehydrogenase pathway; NH(3) and pyruvate from L-alanine: step 1/1. In terms of biological role, may play a role in cell wall synthesis as L-alanine is an important constituent of the peptidoglycan layer. In Staphylococcus aureus (strain MSSA476), this protein is Alanine dehydrogenase 1 (ald1).